Reading from the N-terminus, the 177-residue chain is MAKHKHEEHPEDVEVKETVETAEQAESASPEKSELELANERADDFENKYLRAHAEMQNIQRRANEERQLLQRYRSQDLAKAILPSLDNLERALAVEGLTDDVKKGLEMVQESLVHALKEEGIEEIPADGEFDHNYHMAIQTVPADDEHPADTIAQVFQKGYKLHDRILRPAMVVVYN.

Basic and acidic residues-rich tracts occupy residues 1-19 (MAKHKHEEHPEDVEVKETV) and 29-41 (SPEKSELELANER). A disordered region spans residues 1 to 41 (MAKHKHEEHPEDVEVKETVETAEQAESASPEKSELELANER).

This sequence belongs to the GrpE family. As to quaternary structure, homodimer.

The protein resides in the cytoplasm. Participates actively in the response to hyperosmotic and heat shock by preventing the aggregation of stress-denatured proteins, in association with DnaK and GrpE. It is the nucleotide exchange factor for DnaK and may function as a thermosensor. Unfolded proteins bind initially to DnaJ; upon interaction with the DnaJ-bound protein, DnaK hydrolyzes its bound ATP, resulting in the formation of a stable complex. GrpE releases ADP from DnaK; ATP binding to DnaK triggers the release of the substrate protein, thus completing the reaction cycle. Several rounds of ATP-dependent interactions between DnaJ, DnaK and GrpE are required for fully efficient folding. This is Protein GrpE from Streptococcus gordonii (strain Challis / ATCC 35105 / BCRC 15272 / CH1 / DL1 / V288).